Consider the following 175-residue polypeptide: Large ribosomal subunit protein uL10 (175 aa).

This sequence belongs to the universal ribosomal protein uL10 family. As to quaternary structure, part of the ribosomal stalk of the 50S ribosomal subunit. The N-terminus interacts with L11 and the large rRNA to form the base of the stalk. The C-terminus forms an elongated spine to which L12 dimers bind in a sequential fashion forming a multimeric L10(L12)X complex.

In terms of biological role, forms part of the ribosomal stalk, playing a central role in the interaction of the ribosome with GTP-bound translation factors. This chain is Large ribosomal subunit protein uL10, found in Synechococcus sp. (strain WH7803).